The sequence spans 235 residues: Dephospho-CoA kinase (235 aa).

The 205-residue stretch at 15–219 folds into the DPCK domain; it reads NVGLTGSISC…KKERLQRKSA (205 aa). 23 to 28 lines the ATP pocket; it reads SCGKST.

The protein belongs to the CoaE family.

The protein localises to the cytoplasm. It catalyses the reaction 3'-dephospho-CoA + ATP = ADP + CoA + H(+). It participates in cofactor biosynthesis; coenzyme A biosynthesis; CoA from (R)-pantothenate: step 5/5. Its function is as follows. Catalyzes the phosphorylation of the 3'-hydroxyl group of dephosphocoenzyme A to form coenzyme A. The polypeptide is Dephospho-CoA kinase (Syntrophus aciditrophicus (strain SB)).